Consider the following 288-residue polypeptide: Elongation factor Ts (288 aa).

Residues 79-82 (TDFV) form an involved in Mg(2+) ion dislocation from EF-Tu region.

This sequence belongs to the EF-Ts family.

The protein resides in the cytoplasm. Its function is as follows. Associates with the EF-Tu.GDP complex and induces the exchange of GDP to GTP. It remains bound to the aminoacyl-tRNA.EF-Tu.GTP complex up to the GTP hydrolysis stage on the ribosome. This is Elongation factor Ts from Ehrlichia ruminantium (strain Gardel).